The primary structure comprises 166 residues: ATP synthase subunit b (166 aa).

A helical membrane pass occupies residues 8-28 (FSFGLFFWQALILVILILLLV).

This sequence belongs to the ATPase B chain family. In terms of assembly, F-type ATPases have 2 components, F(1) - the catalytic core - and F(0) - the membrane proton channel. F(1) has five subunits: alpha(3), beta(3), gamma(1), delta(1), epsilon(1). F(0) has three main subunits: a(1), b(2) and c(10-14). The alpha and beta chains form an alternating ring which encloses part of the gamma chain. F(1) is attached to F(0) by a central stalk formed by the gamma and epsilon chains, while a peripheral stalk is formed by the delta and b chains.

The protein resides in the cell inner membrane. F(1)F(0) ATP synthase produces ATP from ADP in the presence of a proton or sodium gradient. F-type ATPases consist of two structural domains, F(1) containing the extramembraneous catalytic core and F(0) containing the membrane proton channel, linked together by a central stalk and a peripheral stalk. During catalysis, ATP synthesis in the catalytic domain of F(1) is coupled via a rotary mechanism of the central stalk subunits to proton translocation. In terms of biological role, component of the F(0) channel, it forms part of the peripheral stalk, linking F(1) to F(0). This is ATP synthase subunit b from Flavobacterium johnsoniae (strain ATCC 17061 / DSM 2064 / JCM 8514 / BCRC 14874 / CCUG 350202 / NBRC 14942 / NCIMB 11054 / UW101) (Cytophaga johnsonae).